The following is a 689-amino-acid chain: UvrABC system protein B (689 aa).

The interval 1 to 26 (MSDASGPLQPDRPEADVPFRVEAPFD) is disordered. The Helicase ATP-binding domain occupies 40–422 (AGYEQGAQQQ…ERAQSANVVE (383 aa)). Residue 53 to 60 (GVTGSGKT) participates in ATP binding. The Beta-hairpin signature appears at 106–129 (YYNYYQPEAYVEQTDKYIEKDASI). Residues 443 to 605 (QVEDLMDRID…TTPTTIEKAV (163 aa)) form the Helicase C-terminal domain. One can recognise a UVR domain in the interval 632–667 (ALLVEDLEARMEDAASNLEFELAADIRDRMRELREA). Positions 668 to 689 (FDLDGGDAPEDPGGVAPETEDW) are disordered.

Belongs to the UvrB family. Forms a heterotetramer with UvrA during the search for lesions. Interacts with UvrC in an incision complex.

The protein localises to the cytoplasm. Its function is as follows. The UvrABC repair system catalyzes the recognition and processing of DNA lesions. A damage recognition complex composed of 2 UvrA and 2 UvrB subunits scans DNA for abnormalities. Upon binding of the UvrA(2)B(2) complex to a putative damaged site, the DNA wraps around one UvrB monomer. DNA wrap is dependent on ATP binding by UvrB and probably causes local melting of the DNA helix, facilitating insertion of UvrB beta-hairpin between the DNA strands. Then UvrB probes one DNA strand for the presence of a lesion. If a lesion is found the UvrA subunits dissociate and the UvrB-DNA preincision complex is formed. This complex is subsequently bound by UvrC and the second UvrB is released. If no lesion is found, the DNA wraps around the other UvrB subunit that will check the other stand for damage. This Halobacterium salinarum (strain ATCC 700922 / JCM 11081 / NRC-1) (Halobacterium halobium) protein is UvrABC system protein B.